Reading from the N-terminus, the 206-residue chain is Nucleoside triphosphate pyrophosphatase (206 aa).

Asp-76 functions as the Proton acceptor in the catalytic mechanism.

It belongs to the Maf family. A divalent metal cation is required as a cofactor.

The protein localises to the cytoplasm. It carries out the reaction a ribonucleoside 5'-triphosphate + H2O = a ribonucleoside 5'-phosphate + diphosphate + H(+). The catalysed reaction is a 2'-deoxyribonucleoside 5'-triphosphate + H2O = a 2'-deoxyribonucleoside 5'-phosphate + diphosphate + H(+). Nucleoside triphosphate pyrophosphatase. May have a dual role in cell division arrest and in preventing the incorporation of modified nucleotides into cellular nucleic acids. This chain is Nucleoside triphosphate pyrophosphatase, found in Streptomyces coelicolor (strain ATCC BAA-471 / A3(2) / M145).